Consider the following 264-residue polypeptide: Accessory gland-specific peptide 26Aa (264 aa).

The N-terminal stretch at 1–18 (MNQILLCSPILLLLFTVA) is a signal peptide. A sufficient for promoting ovulation when expressed in females region spans residues 1–138 (MNQILLCSPI…LQQRLLTEQN (138 aa)). Residues Asn88, Asn122, Asn138, and Asn145 are each glycosylated (N-linked (GlcNAc...) asparagine). Residues 189 to 219 (LQNTRKSTKPCKKRSSKDSAPPAANQFQEAN) are disordered. A compositionally biased stretch (basic residues) spans 194 to 203 (KSTKPCKKRS). The segment at 219 to 264 (NVRNTYRNKYLTLLKELSQKINNEIAKVATDVPTETNPSQGNLPTL) is necessary and sufficient for homodimerization.

As to quaternary structure, homodimer. May form a homodimer. Glycosylation. Post-translationally, undergoes several cleavages as it is secreted and is further processed in the recipient female. The precursor molecule is proteolytically cleaved by the seminal metalloprotease Semp1 at Lys-48 to produce CP1-N and CP1-C. In terms of processing, cleaved at Lys-67 by Semp1 to generate CP2-N and CP2-C. Cleavage appears to take place in the mated female genital tract. Cleaved at Lys-117 by Semp1 to generate CP3-N and CP3-C. Cleavage appears to take place in the mated female genital tract. As to expression, produced in the male accessory glands and secreted into seminal fluid (at protein level). Detected in the main cells and secondary cells of the accessory glands of 1 day old males (at protein level). In 5 day old males, confined to the secondary cells and only reappears in the main cells after mating (at protein level). Produced in adult males 3-4 hr after eclosion, levels increase reaching a peak at day 3-5 which is maintained until at least day 10 of adulthood (at protein level). In unmated male adults, levels are maintained for the first 6 days of adulthood and then gradually decrease for at least the next 8 days. In mated females, detected in the genital tract 3 minutes after the start of mating (ASM) and is secreted into the female hemolymph via the posterior vaginal wall 5 minutes ASM (at protein level).

Its subcellular location is the secreted. It localises to the cytoplasm. Male seminal protein which enhances ovulation in female Drosophila by stimulating the release of oocytes by the ovary following mating. Acts by increasing octopamine (OA) neuronal signaling in the female genital tract leading to the postmating relaxation of the oviduct muscles. This activation of the OA signaling pathway is likely to indirectly contribute to the mating-dependent increase in the number of OA synaptic sites in the female reproductive tract. In terms of biological role, male seminal peptide which is able to enhance ovulation in female Drosophila. The sequence is that of Accessory gland-specific peptide 26Aa from Drosophila melanogaster (Fruit fly).